A 154-amino-acid chain; its full sequence is UPF0178 protein GM21_2006 (154 aa).

It belongs to the UPF0178 family.

In Geobacter sp. (strain M21), this protein is UPF0178 protein GM21_2006.